Consider the following 102-residue polypeptide: Matrix Gla protein (102 aa).

A phosphoserine mark is found at Ser-2, Ser-3, and Ser-5. Residues 18–45 (DANSFMRQPRPPNHWDSRDRFKSPRERT) form a disordered region. One can recognise a Gla domain in the interval 27–73 (RPPNHWDSRDRFKSPRERTREKCEEYRPCERLARQVGLKRAYGKYFG). Residues 30-45 (NHWDSRDRFKSPRERT) are compositionally biased toward basic and acidic residues. 4-carboxyglutamate is present on residues Glu-43, Glu-47, Glu-50, and Glu-51. Cys-49 and Cys-55 are joined by a disulfide. The segment at 72–102 (FGNRRQRPSTSGRLRPRKYRASRYRNHHYRY) is disordered. Residues 85–102 (LRPRKYRASRYRNHHYRY) are compositionally biased toward basic residues.

The protein belongs to the osteocalcin/matrix Gla protein family. In terms of processing, requires vitamin K-dependent gamma-carboxylation for its function. In terms of tissue distribution, accounts for 35-40% of the total protein in the acid demineralization extract of calcified cartilage.

The protein resides in the secreted. In terms of biological role, associates with the organic matrix of calcified cartilage. The chain is Matrix Gla protein (mgp) from Galeorhinus galeus (Tope shark).